A 315-amino-acid polypeptide reads, in one-letter code: MKKAVILFNLGGPDSLNAVRPFLFNLFYDRRIINLPNPFRFLLAKFISAKRENTARKIYEEIGGKSPILENTKMQANALELKLNENRNHVHKVFICMRYWRPFADEVIESVKQFDPDEVILLPLYPQYSTTTTLSSIENWQKNAKRYGLKCNTKMIHRYYDNQDFIEAHTNLIAKYYKLARKIGKPRVLFSAHSLPLSIIKKGDPYASQVERSVELIVEKLAINNLDWSICYQSKIGPVKWLEPSTESELLRAKADGVPVVLSPISFVSEHSETLVELDIEYKAIIKDGYYFRVPTLSTDPLFIKCLADLCINLP.

2 residues coordinate Fe cation: His193 and Glu273.

It belongs to the ferrochelatase family.

It is found in the cytoplasm. It catalyses the reaction heme b + 2 H(+) = protoporphyrin IX + Fe(2+). The protein operates within porphyrin-containing compound metabolism; protoheme biosynthesis; protoheme from protoporphyrin-IX: step 1/1. In terms of biological role, catalyzes the ferrous insertion into protoporphyrin IX. In Wolbachia sp. subsp. Drosophila simulans (strain wRi), this protein is Ferrochelatase.